A 159-amino-acid chain; its full sequence is 2-C-methyl-D-erythritol 2,4-cyclodiphosphate synthase (159 aa).

A divalent metal cation-binding residues include aspartate 8 and histidine 10. Residues 8–10 and 34–35 each bind 4-CDP-2-C-methyl-D-erythritol 2-phosphate; these read DVH and HS. Histidine 42 contacts a divalent metal cation. 4-CDP-2-C-methyl-D-erythritol 2-phosphate contacts are provided by residues 56–58, 61–65, 100–106, 132–135, phenylalanine 139, and arginine 142; these read DIG, FPDTD, AQAPKML, and TTTE.

It belongs to the IspF family. As to quaternary structure, homotrimer. Requires a divalent metal cation as cofactor.

It carries out the reaction 4-CDP-2-C-methyl-D-erythritol 2-phosphate = 2-C-methyl-D-erythritol 2,4-cyclic diphosphate + CMP. It functions in the pathway isoprenoid biosynthesis; isopentenyl diphosphate biosynthesis via DXP pathway; isopentenyl diphosphate from 1-deoxy-D-xylulose 5-phosphate: step 4/6. Functionally, involved in the biosynthesis of isopentenyl diphosphate (IPP) and dimethylallyl diphosphate (DMAPP), two major building blocks of isoprenoid compounds. Catalyzes the conversion of 4-diphosphocytidyl-2-C-methyl-D-erythritol 2-phosphate (CDP-ME2P) to 2-C-methyl-D-erythritol 2,4-cyclodiphosphate (ME-CPP) with a corresponding release of cytidine 5-monophosphate (CMP). The protein is 2-C-methyl-D-erythritol 2,4-cyclodiphosphate synthase of Salmonella dublin (strain CT_02021853).